A 447-amino-acid chain; its full sequence is MTTILKHLPVGQRIGIAFSGGLDTSAALLWMRKKGAVPYAYTANLGQPDEDDYDAIPRRAKEYGAEGARLIDCRKQLVAEGIAAIQCGAFHNTTGGLTYFNTTPLGRAVTGTMLVAAMKEDGVNIWGDGSTYKGNDIERFYRYGLLTNAELQIYKPWLDSDFINELGGRHEMSEFMIACGFDYKMSVEKAYSTDSNMLGATHEAKDLEFLNSSVKIVNPIMGVKFWDENVKIPAEEVTVRFEQGHPVALNGKTFADDVEMMLEANRIGGRHGLGMSDQIENRIIEAKSRGIYEAPGMALLHIAYERLLTGIHNEDTIEQYHAHGRQLGRLLYQGRWFDSQALMLRDSLQRWVASQITGEVTLELRRGNDYSILNTVSDNLTYKAERLTMEKGDSMFTAEDRIGQLTMRNLDITDTREKLFGYAQSGLLSASSATGLPQVENLENKGK.

ATP is bound by residues 17–25 (AFSGGLDTS) and alanine 43. Tyrosine 99 provides a ligand contact to L-citrulline. Glycine 129 and threonine 131 together coordinate ATP. Threonine 131, asparagine 135, and aspartate 136 together coordinate L-aspartate. An L-citrulline-binding site is contributed by asparagine 135. Aspartate 136 serves as a coordination point for ATP. The L-citrulline site is built by arginine 139 and serine 192. An ATP-binding site is contributed by aspartate 194. The L-citrulline site is built by threonine 201, glutamate 203, and glutamate 280.

It belongs to the argininosuccinate synthase family. Type 2 subfamily. As to quaternary structure, homotetramer.

Its subcellular location is the cytoplasm. It carries out the reaction L-citrulline + L-aspartate + ATP = 2-(N(omega)-L-arginino)succinate + AMP + diphosphate + H(+). It participates in amino-acid biosynthesis; L-arginine biosynthesis; L-arginine from L-ornithine and carbamoyl phosphate: step 2/3. The sequence is that of Argininosuccinate synthase from Klebsiella pneumoniae subsp. pneumoniae (strain ATCC 700721 / MGH 78578).